The following is a 292-amino-acid chain: uncharacterized protein (292 aa).

Catalysis depends on charge relay system residues Thr43 and Tyr105. Tyr131 acts as the Proton donor in catalysis. The Schiff-base intermediate with substrate role is filled by Lys159.

Belongs to the DapA family. As to quaternary structure, homotetramer.

It is found in the cytoplasm. This is an uncharacterized protein from Thermococcus kodakarensis (strain ATCC BAA-918 / JCM 12380 / KOD1) (Pyrococcus kodakaraensis (strain KOD1)).